The sequence spans 304 residues: Aspartate carbamoyltransferase catalytic subunit (304 aa).

R56 and T57 together coordinate carbamoyl phosphate. K85 serves as a coordination point for L-aspartate. Carbamoyl phosphate is bound by residues R106, H134, and Q137. L-aspartate is bound by residues R167 and R226. L265 and P266 together coordinate carbamoyl phosphate.

It belongs to the aspartate/ornithine carbamoyltransferase superfamily. ATCase family. Heterooligomer of catalytic and regulatory chains.

It carries out the reaction carbamoyl phosphate + L-aspartate = N-carbamoyl-L-aspartate + phosphate + H(+). The protein operates within pyrimidine metabolism; UMP biosynthesis via de novo pathway; (S)-dihydroorotate from bicarbonate: step 2/3. Catalyzes the condensation of carbamoyl phosphate and aspartate to form carbamoyl aspartate and inorganic phosphate, the committed step in the de novo pyrimidine nucleotide biosynthesis pathway. This Picrophilus torridus (strain ATCC 700027 / DSM 9790 / JCM 10055 / NBRC 100828 / KAW 2/3) protein is Aspartate carbamoyltransferase catalytic subunit.